Consider the following 509-residue polypeptide: Cytochrome P450 4A10 (509 aa).

2 consecutive transmembrane segments (helical) span residues 11–31 and 121–141; these read FTGS…LLLL and LLAP…WFQH. Glu320 lines the heme pocket. Ser439 is subject to Phosphoserine. Heme is bound at residue Cys456.

It belongs to the cytochrome P450 family. Requires heme as cofactor. In terms of tissue distribution, expressed in liver (at protein level) and kidney (at protein level).

The protein localises to the endoplasmic reticulum membrane. Its subcellular location is the microsome membrane. The catalysed reaction is an omega-methyl-long-chain fatty acid + reduced [NADPH--hemoprotein reductase] + O2 = an omega-hydroxy-long-chain fatty acid + oxidized [NADPH--hemoprotein reductase] + H2O + H(+). It carries out the reaction dodecanoate + reduced [NADPH--hemoprotein reductase] + O2 = 12-hydroxydodecanoate + oxidized [NADPH--hemoprotein reductase] + H2O + H(+). It catalyses the reaction dodecanoate + reduced [NADPH--hemoprotein reductase] + O2 = 11-hydroxydodecanoate + oxidized [NADPH--hemoprotein reductase] + H2O + H(+). The enzyme catalyses tetradecanoate + reduced [NADPH--hemoprotein reductase] + O2 = 14-hydroxytetradecanoate + oxidized [NADPH--hemoprotein reductase] + H2O + H(+). The catalysed reaction is hexadecanoate + reduced [NADPH--hemoprotein reductase] + O2 = 16-hydroxyhexadecanoate + oxidized [NADPH--hemoprotein reductase] + H2O + H(+). It carries out the reaction (9Z)-octadecenoate + reduced [NADPH--hemoprotein reductase] + O2 = 18-hydroxy-(9Z)-octadecenoate + oxidized [NADPH--hemoprotein reductase] + H2O + H(+). It catalyses the reaction (9Z,12Z)-octadecadienoate + reduced [NADPH--hemoprotein reductase] + O2 = 18-hydroxy-(9Z,12Z)-octadecadienoate + oxidized [NADPH--hemoprotein reductase] + H2O + H(+). The enzyme catalyses (9Z,12Z)-octadecadienoate + reduced [NADPH--hemoprotein reductase] + O2 = 17-hydroxy-(9Z,12Z)-octadecadienoate + oxidized [NADPH--hemoprotein reductase] + H2O + H(+). The catalysed reaction is (5Z,8Z,11Z,14Z)-eicosatetraenoate + reduced [NADPH--hemoprotein reductase] + O2 = 20-hydroxy-(5Z,8Z,11Z,14Z)-eicosatetraenoate + oxidized [NADPH--hemoprotein reductase] + H2O + H(+). It carries out the reaction 8,9-epoxy-(5Z,11Z,14Z)-eicosatrienoate + reduced [NADPH--hemoprotein reductase] + O2 = 20-hydroxy-8,9-epoxy-(5Z,11Z,14Z)-eicosatrienoate + oxidized [NADPH--hemoprotein reductase] + H2O + H(+). A cytochrome P450 monooxygenase involved in the metabolism of fatty acids. Catalyzes predominantly the oxidation of the terminal carbon (omega-oxidation) of long-chain fatty acids. Acts as a major omega-hydroxylase for dodecanoic (lauric) acid in liver. In kidney, may play an important role in omega-hydroxylation of (5Z,8Z,11Z,14Z)-eicosatetraenoic acid (arachidonate) to 20-hydroxyeicosatetraenoic acid (20-HETE), a signaling molecule acting both as vasoconstrictive and natriuretic with overall effect on arterial blood pressure. Also participates in the formation of anti-inflammatory hydroxyepoxyeicosatrienoic acids (HEETs) in kidney by converting 8,9-epoxyeicosatrienoic acid (EET) to 20,8,9-HEET, an activator of PPARA. Displays substantially lower fatty acid omega-1 hydroxylase activity. Mechanistically, uses molecular oxygen inserting one oxygen atom into a substrate, and reducing the second into a water molecule, with two electrons provided by NADPH via cytochrome P450 reductase (CPR; NADPH-ferrihemoprotein reductase). The sequence is that of Cytochrome P450 4A10 (Cyp4a10) from Rattus norvegicus (Rat).